Here is a 171-residue protein sequence, read N- to C-terminus: Ribosome maturation factor RimM (171 aa).

In terms of domain architecture, PRC barrel spans 97-170 (EGEYYYHEVI…QVTIHVMEGL (74 aa)).

Belongs to the RimM family. In terms of assembly, binds ribosomal protein uS19.

Its subcellular location is the cytoplasm. Its function is as follows. An accessory protein needed during the final step in the assembly of 30S ribosomal subunit, possibly for assembly of the head region. Essential for efficient processing of 16S rRNA. May be needed both before and after RbfA during the maturation of 16S rRNA. It has affinity for free ribosomal 30S subunits but not for 70S ribosomes. The protein is Ribosome maturation factor RimM of Bacillus cytotoxicus (strain DSM 22905 / CIP 110041 / 391-98 / NVH 391-98).